A 94-amino-acid chain; its full sequence is Large ribosomal subunit protein uL23 (94 aa).

The protein belongs to the universal ribosomal protein uL23 family. In terms of assembly, part of the 50S ribosomal subunit. Contacts protein L29, and trigger factor when it is bound to the ribosome.

Its function is as follows. One of the early assembly proteins it binds 23S rRNA. One of the proteins that surrounds the polypeptide exit tunnel on the outside of the ribosome. Forms the main docking site for trigger factor binding to the ribosome. The protein is Large ribosomal subunit protein uL23 of Treponema pallidum (strain Nichols).